The sequence spans 433 residues: Serine/threonine-protein kinase toxin HipA (433 aa).

S147 carries the post-translational modification Phosphoserine; by autocatalysis. ATP is bound by residues 151 to 154, K178, and 220 to 222; these read VQPK and ERF. Catalysis depends on D306, which acts as the Proton acceptor. ATP-binding positions include 308–311 and 327–328; these read HGKN and YD. DNA-binding regions lie at residues 380–384 and R429; that span reads RIARR.

The protein belongs to the HipA Ser/Thr kinase family. Monomer. Forms a HipA(2)HipB(2)-DNA complex with cognate antitoxin HipB; has higher affinity for the latter when HipB is prebound to DNA and HipA is phosphorylated. Binds DNA in the ternary complex.

It carries out the reaction L-seryl-[protein] + ATP = O-phospho-L-seryl-[protein] + ADP + H(+). The catalysed reaction is L-threonyl-[protein] + ATP = O-phospho-L-threonyl-[protein] + ADP + H(+). Functionally, toxic component of a type II toxin-antitoxin (TA) system; overexpression in wild-type temporarily inhibits cell growth, overexpression in a hipAB deletion leads to acute growth inhibition. The toxic effect of HipA is neutralized by its cognate antitoxin HipB. In the ternary phosphoserine-HipA-HipB-DNA complex the DNA is bent about 125 degrees; all HipA in the crystallized ternary complex is phosphorylated. In E.coli phosphorylation of HipA is thought to release HipB from the HipA-HipB-DNA complex, suggesting the complex functions differently in the 2 bacteria. Phosphorylates Glu-tRNA-ligase (GltX, on 'Ser-239') in vivo, with HipB probably acts as a corepressor for transcription of the hipBA promoter. The chain is Serine/threonine-protein kinase toxin HipA from Shewanella oneidensis (strain ATCC 700550 / JCM 31522 / CIP 106686 / LMG 19005 / NCIMB 14063 / MR-1).